Consider the following 264-residue polypeptide: Small ribosomal subunit protein uS2 (264 aa).

Belongs to the universal ribosomal protein uS2 family.

The protein is Small ribosomal subunit protein uS2 of Helicobacter pylori (strain Shi470).